The primary structure comprises 391 residues: Multidrug resistance protein MdtL (391 aa).

The next 12 membrane-spanning stretches (helical) occupy residues Phe-4–Val-24, Ile-42–Ala-62, Pro-69–Glu-89, Leu-93–Phe-113, Leu-131–Met-151, Ser-158–Leu-178, Phe-203–Val-222, Ala-245–Phe-265, Thr-269–Pro-289, Val-293–Met-313, Leu-331–Ile-351, and Met-356–Ala-376.

The protein belongs to the major facilitator superfamily. DHA1 family. MdtL (TC 2.A.1.2.22) subfamily.

It is found in the cell inner membrane. In terms of biological role, confers resistance to chloramphenicol. The protein is Multidrug resistance protein MdtL of Escherichia coli O9:H4 (strain HS).